Reading from the N-terminus, the 189-residue chain is GTP cyclohydrolase 1 (189 aa).

Zn(2+)-binding residues include C78, H81, and C150.

Belongs to the GTP cyclohydrolase I family. In terms of assembly, homomer.

The catalysed reaction is GTP + H2O = 7,8-dihydroneopterin 3'-triphosphate + formate + H(+). It functions in the pathway cofactor biosynthesis; 7,8-dihydroneopterin triphosphate biosynthesis; 7,8-dihydroneopterin triphosphate from GTP: step 1/1. The sequence is that of GTP cyclohydrolase 1 from Bacillus anthracis (strain A0248).